The primary structure comprises 265 residues: Phosphonates import ATP-binding protein PhnC (265 aa).

One can recognise an ABC transporter domain in the interval 3-247 (LRLKQAFLHH…MLDTLYANEQ (245 aa)). Residue 36-43 (GPSGAGKS) coordinates ATP.

Belongs to the ABC transporter superfamily. Phosphonates importer (TC 3.A.1.9.1) family. The complex is composed of two ATP-binding proteins (PhnC), two transmembrane proteins (PhnE) and a solute-binding protein (PhnD).

The protein resides in the cell inner membrane. It carries out the reaction phosphonate(out) + ATP + H2O = phosphonate(in) + ADP + phosphate + H(+). Its function is as follows. Part of the ABC transporter complex PhnCDE involved in phosphonates import. Responsible for energy coupling to the transport system. This Pseudomonas fluorescens (strain Pf0-1) protein is Phosphonates import ATP-binding protein PhnC.